A 216-amino-acid polypeptide reads, in one-letter code: Protein-L-isoaspartate O-methyltransferase (216 aa).

Ser66 is an active-site residue.

Belongs to the methyltransferase superfamily. L-isoaspartyl/D-aspartyl protein methyltransferase family.

The protein resides in the cytoplasm. The catalysed reaction is [protein]-L-isoaspartate + S-adenosyl-L-methionine = [protein]-L-isoaspartate alpha-methyl ester + S-adenosyl-L-homocysteine. Its function is as follows. Catalyzes the methyl esterification of L-isoaspartyl residues in peptides and proteins that result from spontaneous decomposition of normal L-aspartyl and L-asparaginyl residues. It plays a role in the repair and/or degradation of damaged proteins. This chain is Protein-L-isoaspartate O-methyltransferase, found in Colwellia psychrerythraea (strain 34H / ATCC BAA-681) (Vibrio psychroerythus).